Consider the following 358-residue polypeptide: Aromatic amino acid aminotransferase (358 aa).

N6-(pyridoxal phosphate)lysine is present on Lys-222.

This sequence belongs to the class-II pyridoxal-phosphate-dependent aminotransferase family. Homodimer. Pyridoxal 5'-phosphate is required as a cofactor.

It catalyses the reaction an aromatic L-alpha-amino acid + 2-oxoglutarate = an aromatic oxo-acid + L-glutamate. In terms of biological role, aminotransferase that catalyzes the conversion of aromatic amino acids and 2-oxoglutarate into corresponding aromatic oxo acids and L-glutamate. The protein is Aromatic amino acid aminotransferase of Mycobacterium sp. (strain JLS).